The chain runs to 139 residues: Putative pre-16S rRNA nuclease (139 aa).

It belongs to the YqgF nuclease family.

The protein resides in the cytoplasm. Could be a nuclease involved in processing of the 5'-end of pre-16S rRNA. The chain is Putative pre-16S rRNA nuclease from Streptococcus suis (strain 98HAH33).